Reading from the N-terminus, the 445-residue chain is Lipid A 1-phosphatase (445 aa).

The N-terminal stretch at 1–22 is a signal peptide; it reads MNRESFLLLLVLLFALPLHLQA.

It localises to the periplasm. Its pathway is bacterial outer membrane biogenesis; LPS lipid A biosynthesis. In terms of biological role, removes the 1-phosphate group from lipid A species. Absence of phosphate groups in lipid A renders the bacteria resistant to host-derived cationic antimicrobial peptides (CAMP) and allowing it to camouflage itself from the host innate immune response. This chain is Lipid A 1-phosphatase, found in Porphyromonas gingivalis (strain ATCC 33277 / DSM 20709 / CIP 103683 / JCM 12257 / NCTC 11834 / 2561).